Here is a 130-residue protein sequence, read N- to C-terminus: Small ribosomal subunit protein uS9 (130 aa).

The protein belongs to the universal ribosomal protein uS9 family.

This chain is Small ribosomal subunit protein uS9, found in Nitrosospira multiformis (strain ATCC 25196 / NCIMB 11849 / C 71).